The primary structure comprises 312 residues: tRNA uridine(34) hydroxylase (312 aa).

Residues 123–217 (SDPEVLLIDT…YLEEVPQEQS (95 aa)) enclose the Rhodanese domain. The active-site Cysteine persulfide intermediate is C177. The span at 282–293 (ARERQKQIELAR) shows a compositional bias: basic and acidic residues. Positions 282 to 312 (ARERQKQIELARQRNQPHPLGRDPRQSTLEN) are disordered.

It belongs to the TrhO family.

It catalyses the reaction uridine(34) in tRNA + AH2 + O2 = 5-hydroxyuridine(34) in tRNA + A + H2O. In terms of biological role, catalyzes oxygen-dependent 5-hydroxyuridine (ho5U) modification at position 34 in tRNAs. The protein is tRNA uridine(34) hydroxylase of Pseudomonas paraeruginosa (strain DSM 24068 / PA7) (Pseudomonas aeruginosa (strain PA7)).